The sequence spans 224 residues: Phosphoglycolate phosphatase (224 aa).

Aspartate 11 (nucleophile) is an active-site residue. Residues aspartate 11, aspartate 13, and aspartate 177 each coordinate Mg(2+).

Belongs to the HAD-like hydrolase superfamily. CbbY/CbbZ/Gph/YieH family. Mg(2+) is required as a cofactor.

It carries out the reaction 2-phosphoglycolate + H2O = glycolate + phosphate. It functions in the pathway organic acid metabolism; glycolate biosynthesis; glycolate from 2-phosphoglycolate: step 1/1. Its function is as follows. Specifically catalyzes the dephosphorylation of 2-phosphoglycolate. Is involved in the dissimilation of the intracellular 2-phosphoglycolate formed during the DNA repair of 3'-phosphoglycolate ends, a major class of DNA lesions induced by oxidative stress. The sequence is that of Phosphoglycolate phosphatase from Haemophilus influenzae (strain 86-028NP).